Consider the following 357-residue polypeptide: Methylthioribose-1-phosphate isomerase (357 aa).

Residues 49–51 (RGA), R89, and Q197 each bind substrate. D238 acts as the Proton donor in catalysis. 248 to 249 (NK) contacts substrate.

Belongs to the eIF-2B alpha/beta/delta subunits family. MtnA subfamily.

It carries out the reaction 5-(methylsulfanyl)-alpha-D-ribose 1-phosphate = 5-(methylsulfanyl)-D-ribulose 1-phosphate. It functions in the pathway amino-acid biosynthesis; L-methionine biosynthesis via salvage pathway; L-methionine from S-methyl-5-thio-alpha-D-ribose 1-phosphate: step 1/6. Its function is as follows. Catalyzes the interconversion of methylthioribose-1-phosphate (MTR-1-P) into methylthioribulose-1-phosphate (MTRu-1-P). The protein is Methylthioribose-1-phosphate isomerase of Leptospira biflexa serovar Patoc (strain Patoc 1 / Ames).